A 264-amino-acid polypeptide reads, in one-letter code: Apolipoprotein A-I (264 aa).

Residues 1–18 (MKAVVLAVAVLFLTGSQA) form the signal peptide. 2 tandem repeats follow at residues 67-88 (LKLL…ADLG) and 89-110 (PVTQ…QEMN). Positions 67 to 264 (LKLLDNWDTL…DQATKQLTAQ (198 aa)) are 10 X approximate tandem repeats. At Met-109 the chain carries Methionine sulfoxide. The stretch at 111–121 (KDLQEVKQKVQ) is one 3; half-length repeat. A run of 5 repeats spans residues 122–143 (PYLD…EKVG), 144–165 (PLGT…EKLT), 166–187 (PLGE…TQLA), 188–207 (PYSD…LRDS), and 208–229 (TTFA…EKAK). A 9; half-length repeat occupies 230–240 (PALEDLRQGLL). The stretch at 241–264 (PVLESLKASILSSIDQATKQLTAQ) is repeat 10.

This sequence belongs to the apolipoprotein A1/A4/E family. In terms of assembly, homodimer. Interacts with APOA1BP and CLU. Component of a sperm activating protein complex (SPAP), consisting of APOA1, an immunoglobulin heavy chain, an immunoglobulin light chain and albumin. Interacts with NDRG1. Interacts with SCGB3A2. Interacts with NAXE and YJEFN3. Glycosylated. Post-translationally, palmitoylated. In terms of processing, phosphorylation sites are present in the extracellular medium.

It localises to the secreted. In terms of biological role, participates in the reverse transport of cholesterol from tissues to the liver for excretion by promoting cholesterol efflux from tissues and by acting as a cofactor for the lecithin cholesterol acyltransferase (LCAT). As part of the SPAP complex, activates spermatozoa motility. This is Apolipoprotein A-I (APOA1) from Chinchilla lanigera (Long-tailed chinchilla).